The sequence spans 113 residues: MMSAAPSPDPSLDNEWKEWKTTFAKAYSLDEERHRRLMWEENKKKIEAHNADYERGKTSFYMGLNQFSDLTPEEFRTNCCGSSMCRGEMAPDLPEYEDLGKNSYLTPGRAQPE.

Tandem repeats lie at residues 15-17 and 18-20. Residues 15–20 form a 2 X 3 AA tandem repeats of E-W-K region; the sequence is EWKEWK.

The protein to the propeptide regions of cysteine proteases.

Not known, expressed in activated T-cell. This is Protein CTLA-2-beta (Ctla2b) from Mus musculus (Mouse).